A 29-amino-acid chain; its full sequence is Cycloviolacin-O22 (29 aa).

The segment at residues 1–29 is a cross-link (cyclopeptide (Gly-Asn)); that stretch reads GLPICGETCVGGTCNTPGCTCSWPVCTRN. Disulfide bonds link cysteine 5-cysteine 19, cysteine 9-cysteine 21, and cysteine 14-cysteine 26.

In terms of processing, this is a cyclic peptide. As to expression, expressed in roots and runners but not in leaves, petals and petioles (at protein level).

In terms of biological role, probably participates in a plant defense mechanism. This is Cycloviolacin-O22 from Viola odorata (Sweet violet).